Consider the following 44-residue polypeptide: Omega-plectoxin-Pt1a (44 aa).

5 disulfides stabilise this stretch: C3/C17, C10/C23, C16/C35, C20/C42, and C25/C33. T44 carries the post-translational modification Threonine amide. T44 is lipidated: O-palmitoyl threonine.

It belongs to the neurotoxin 02 (plectoxin) family. 02 (plectoxin) subfamily. Post-translationally, contains 5 disulfide bonds. In terms of processing, acylation by palmitate is required for biological activity. In terms of tissue distribution, expressed by the venom gland.

Its subcellular location is the secreted. In terms of biological role, toxin that inhibits presynaptic voltage-gated calcium channel (Cav) in Drosophila nerve terminals, most likely through specific block of the Cav2 channel (known as Dmca1A). The sequence is that of Omega-plectoxin-Pt1a from Plectreurys tristis (Spider).